The following is a 176-amino-acid chain: Siroheme decarboxylase alpha subunit (176 aa).

The interval 1–24 (MTEAHNACCHPSGTAAGHHGAGKA) is disordered. The span at 12 to 24 (SGTAAGHHGAGKA) shows a compositional bias: low complexity.

This sequence belongs to the Ahb/Nir family. In terms of assembly, forms a heterodimer composed of AhbA and AhbB. Also forms heterotetramers.

It catalyses the reaction siroheme + 2 H(+) = 12,18-didecarboxysiroheme + 2 CO2. It functions in the pathway porphyrin-containing compound metabolism; protoheme biosynthesis. Functionally, involved in siroheme-dependent heme b biosynthesis. Catalyzes the decarboxylation of siroheme into didecarboxysiroheme. The sequence is that of Siroheme decarboxylase alpha subunit from Nitratidesulfovibrio vulgaris (strain ATCC 29579 / DSM 644 / CCUG 34227 / NCIMB 8303 / VKM B-1760 / Hildenborough) (Desulfovibrio vulgaris).